Consider the following 227-residue polypeptide: MTLSFLDQFASQSFLGIPLIAIAILIPWMLFPSPYKRWMSNRLITFQSWFIARTTNQLMLPLNTGAHKWAMILTALLLFLMTLNLLGLLPYTFTPTTQLSMNMALAVPLWLATVLIGMRNQPTHSLAHLLPEGTPTPLIPILIIIETISLFIRPLALGVRLTANLTAGHLLIQLISTATFVMLSIMPTIATLTFIVLALLTILEIAVAMIQAYVLVLLLSLYLQENV.

A run of 6 helical transmembrane segments spans residues Phe-14–Pro-34, Trp-69–Leu-89, Gln-98–Met-118, Ile-139–Val-159, Leu-165–Ile-185, and Ile-189–Met-209.

This sequence belongs to the ATPase A chain family. As to quaternary structure, component of the ATP synthase complex composed at least of ATP5F1A/subunit alpha, ATP5F1B/subunit beta, ATP5MC1/subunit c (homooctomer), MT-ATP6/subunit a, MT-ATP8/subunit 8, ATP5ME/subunit e, ATP5MF/subunit f, ATP5MG/subunit g, ATP5MK/subunit k, ATP5MJ/subunit j, ATP5F1C/subunit gamma, ATP5F1D/subunit delta, ATP5F1E/subunit epsilon, ATP5PF/subunit F6, ATP5PB/subunit b, ATP5PD/subunit d, ATP5PO/subunit OSCP. ATP synthase complex consists of a soluble F(1) head domain (subunits alpha(3) and beta(3)) - the catalytic core - and a membrane F(0) domain - the membrane proton channel (subunits c, a, 8, e, f, g, k and j). These two domains are linked by a central stalk (subunits gamma, delta, and epsilon) rotating inside the F1 region and a stationary peripheral stalk (subunits F6, b, d, and OSCP). Interacts with DNAJC30; interaction is direct.

The protein resides in the mitochondrion inner membrane. The catalysed reaction is H(+)(in) = H(+)(out). In terms of biological role, subunit a, of the mitochondrial membrane ATP synthase complex (F(1)F(0) ATP synthase or Complex V) that produces ATP from ADP in the presence of a proton gradient across the membrane which is generated by electron transport complexes of the respiratory chain. ATP synthase complex consist of a soluble F(1) head domain - the catalytic core - and a membrane F(1) domain - the membrane proton channel. These two domains are linked by a central stalk rotating inside the F(1) region and a stationary peripheral stalk. During catalysis, ATP synthesis in the catalytic domain of F(1) is coupled via a rotary mechanism of the central stalk subunits to proton translocation. With the subunit c (ATP5MC1), forms the proton-conducting channel in the F(0) domain, that contains two crucial half-channels (inlet and outlet) that facilitate proton movement from the mitochondrial intermembrane space (IMS) into the matrix. Protons are taken up via the inlet half-channel and released through the outlet half-channel, following a Grotthuss mechanism. The sequence is that of ATP synthase F(0) complex subunit a from Polypterus ornatipinnis (Ornate bichir).